The primary structure comprises 433 residues: Enolase (433 aa).

Glutamine 167 provides a ligand contact to (2R)-2-phosphoglycerate. Glutamate 209 acts as the Proton donor in catalysis. Aspartate 246, glutamate 291, and aspartate 318 together coordinate Mg(2+). The (2R)-2-phosphoglycerate site is built by lysine 343, arginine 372, serine 373, and lysine 394. The active-site Proton acceptor is lysine 343.

It belongs to the enolase family. As to quaternary structure, component of the RNA degradosome, a multiprotein complex involved in RNA processing and mRNA degradation. Requires Mg(2+) as cofactor.

Its subcellular location is the cytoplasm. The protein resides in the secreted. It localises to the cell surface. It carries out the reaction (2R)-2-phosphoglycerate = phosphoenolpyruvate + H2O. Its pathway is carbohydrate degradation; glycolysis; pyruvate from D-glyceraldehyde 3-phosphate: step 4/5. In terms of biological role, catalyzes the reversible conversion of 2-phosphoglycerate (2-PG) into phosphoenolpyruvate (PEP). It is essential for the degradation of carbohydrates via glycolysis. This chain is Enolase, found in Vibrio vulnificus (strain CMCP6).